A 495-amino-acid polypeptide reads, in one-letter code: MFVNFKYFSFFIRTKMDGVTGGGTNIGEAVTAPPPRNPHPATLLNANSLPPPFLSKTYDMVEDPATDAIVSWSPTNNSFIVWDPPEFSRDLLPKYFKHNNFSSFVRQLNTYGFRKVDPDRWEFANEGFLRGQKHLLKKISRRKSVQGHGSSSSNPQSQQLSQGQGSMAALSSCVEVGKFGLEEEVEQLKRDKNVLMQELVKLRQQQQTTDNKLQVLVKHLQVMEQRQQQIMSFLAKAVQNPTFLSQFIQKQTDSNMHVTEANKKRRLREDSTAATESNSHSHSLEASDGQIVKYQPLRNDSMMWNMMKTDDKYPFLDGFSSPNQVSGVTLQEVLPITSGQSQAYASVPSGQPLSYLPSTSTSLPDTIMPETSQIPQLTRESINDFPTENFMDTEKNVPEAFISPSPFLDGGSVPIQLEGIPEDPEIDELMSNFEFLEEYMPESPVFGDATTLENNNNNNNNNNNNNNNNNNNNTNGRHMDKLIEELGLLTSETEH.

Residues 50–144 (PPPFLSKTYD…LLKKISRRKS (95 aa)) mediate DNA binding. The interval 140-164 (SRRKSVQGHGSSSSNPQSQQLSQGQ) is disordered. Low complexity predominate over residues 146–164 (QGHGSSSSNPQSQQLSQGQ). Residues 172–238 (SCVEVGKFGL…QIMSFLAKAV (67 aa)) form a hydrophobic repeat HR-A/B region. Positions 255–288 (NMHVTEANKKRRLREDSTAATESNSHSHSLEASD) are disordered. Positions 262–268 (NKKRRLR) match the Nuclear localization signal motif. The span at 272–281 (TAATESNSHS) shows a compositional bias: polar residues. Positions 433–442 (FEFLEEYMPE) match the AHA motif. The interval 445 to 477 (VFGDATTLENNNNNNNNNNNNNNNNNNNNTNGR) is disordered. Residues 454–473 (NNNNNNNNNNNNNNNNNNNN) show a composition bias toward low complexity. The short motif at 482 to 489 (LIEELGLL) is the Nuclear export signal element.

The protein belongs to the HSF family. Class A subfamily. In terms of assembly, homotrimer. Interacts with HSP70-1 and HSP70-4. Binds to CRK1. Binds to HSBP. In terms of processing, exhibits temperature-dependent phosphorylation. Phosphorylated by CRK1. Constitutively expressed.

It is found in the cytoplasm. Its subcellular location is the nucleus. Its function is as follows. Transcriptional activator that specifically binds DNA sequence 5'-AGAAnnTTCT-3' known as heat shock promoter elements (HSE). The polypeptide is Heat stress transcription factor A-1a (HSFA1A) (Arabidopsis thaliana (Mouse-ear cress)).